The primary structure comprises 88 residues: Phosphocarrier protein HPr (88 aa).

The HPr domain occupies 2–88; sequence AQKTFKVTAD…ETMKSEGLGE (87 aa). Serine 12 is modified (phosphoserine). The Pros-phosphohistidine intermediate; alternate role is filled by histidine 15. Position 15 is a tele-phosphohistidine; alternate (histidine 15). Serine 46 carries the post-translational modification Phosphoserine; by HPrK/P.

Belongs to the HPr family. Phosphorylated during sporulation.

It localises to the cytoplasm. Phosphorylation on Ser-46 inhibits the phosphoryl transfer from enzyme I to HPr. Functionally, general (non sugar-specific) component of the phosphoenolpyruvate-dependent sugar phosphotransferase system (sugar PTS). This major carbohydrate active-transport system catalyzes the phosphorylation of incoming sugar substrates concomitantly with their translocation across the cell membrane. The phosphoryl group from phosphoenolpyruvate (PEP) is transferred to the phosphoryl carrier protein HPr by enzyme I. Phospho-HPr then transfers it to the PTS EIIA domain. P-Ser-HPr interacts with the catabolite control protein A (CcpA), forming a complex that binds to DNA at the catabolite response elements cre, operator sites preceding a large number of catabolite-regulated genes. Thus, P-Ser-HPr is a corepressor in carbon catabolite repression (CCR), a mechanism that allows bacteria to coordinate and optimize the utilization of available carbon sources. P-Ser-HPr also plays a role in inducer exclusion, in which it probably interacts with several non-PTS permeases and inhibits their transport activity. The sequence is that of Phosphocarrier protein HPr (ptsH) from Bacillus subtilis (strain 168).